Here is a 217-residue protein sequence, read N- to C-terminus: Redox-sensing transcriptional repressor Rex (217 aa).

Residues 17–56 (RYLRYVEDLLNHDVLRISSSELSQRMGYTASQVRQDFNNF) constitute a DNA-binding region (H-T-H motif). 91–96 (GVGNLG) is an NAD(+) binding site.

It belongs to the transcriptional regulatory Rex family. As to quaternary structure, homodimer.

Its subcellular location is the cytoplasm. Modulates transcription in response to changes in cellular NADH/NAD(+) redox state. The sequence is that of Redox-sensing transcriptional repressor Rex from Caldicellulosiruptor bescii (strain ATCC BAA-1888 / DSM 6725 / KCTC 15123 / Z-1320) (Anaerocellum thermophilum).